A 468-amino-acid polypeptide reads, in one-letter code: ATP synthase subunit beta (468 aa).

An ATP-binding site is contributed by 148-155 (GGAGVGKT).

This sequence belongs to the ATPase alpha/beta chains family. In terms of assembly, F-type ATPases have 2 components, CF(1) - the catalytic core - and CF(0) - the membrane proton channel. CF(1) has five subunits: alpha(3), beta(3), gamma(1), delta(1), epsilon(1). CF(0) has three main subunits: a(1), b(2) and c(9-12). The alpha and beta chains form an alternating ring which encloses part of the gamma chain. CF(1) is attached to CF(0) by a central stalk formed by the gamma and epsilon chains, while a peripheral stalk is formed by the delta and b chains.

It localises to the cell membrane. It catalyses the reaction ATP + H2O + 4 H(+)(in) = ADP + phosphate + 5 H(+)(out). Produces ATP from ADP in the presence of a proton gradient across the membrane. The catalytic sites are hosted primarily by the beta subunits. This Stenotrophomonas maltophilia (strain K279a) protein is ATP synthase subunit beta.